We begin with the raw amino-acid sequence, 1043 residues long: Desmoglein-1 (1043 aa).

An N-terminal signal peptide occupies residues M1 to S23. Residues D24 to R49 constitute a propeptide that is removed on maturation. 4 Cadherin domains span residues E50–S158, M159–E270, L271–F385, and R386–S498. At E50–P551 the chain is on the extracellular side. N-linked (GlcNAc...) asparagine glycans are attached at residues N110 and N180. N-linked (GlcNAc...) asparagine glycosylation occurs at N496. Residues A552–M572 traverse the membrane as a helical segment. At C573–K1043 the chain is on the cytoplasmic side. The tract at residues D770–P807 is disordered. 5 Desmoglein repeat repeats span residues T819–E845, S846–V875, G876–I905, A906–I933, and Q934–V962.

As to quaternary structure, binds to JUP/plakoglobin. Interacts with PKP2. Interacts with DSC3; there is evidence to suggest that the interaction promotes cell-cell adhesion of keratinocytes. As to expression, expressed in the epidermis. Expressed in the muzzle epithelium.

Its subcellular location is the cell membrane. The protein resides in the cell junction. It localises to the desmosome. It is found in the cytoplasm. The protein localises to the nucleus. In terms of biological role, component of intercellular desmosome junctions. Involved in the interaction of plaque proteins and intermediate filaments mediating cell-cell adhesion. The protein is Desmoglein-1 (DSG1) of Bos taurus (Bovine).